A 206-amino-acid polypeptide reads, in one-letter code: Orotate phosphoribosyltransferase (206 aa).

Residues arginine 93, lysine 97, histidine 99, and 119–127 each bind 5-phospho-alpha-D-ribose 1-diphosphate; that span reads EDLISTGGT. Serine 123 lines the orotate pocket.

It belongs to the purine/pyrimidine phosphoribosyltransferase family. PyrE subfamily. Homodimer. Mg(2+) serves as cofactor.

The enzyme catalyses orotidine 5'-phosphate + diphosphate = orotate + 5-phospho-alpha-D-ribose 1-diphosphate. The protein operates within pyrimidine metabolism; UMP biosynthesis via de novo pathway; UMP from orotate: step 1/2. Functionally, catalyzes the transfer of a ribosyl phosphate group from 5-phosphoribose 1-diphosphate to orotate, leading to the formation of orotidine monophosphate (OMP). The polypeptide is Orotate phosphoribosyltransferase (Bacillus caldolyticus).